A 1220-amino-acid chain; its full sequence is Post-transcriptional regulator MKT1L (1220 aa).

Positions 1–107 (MRKAGANRNN…SPWNSPPQQT (107 aa)) are disordered. Residues 34-70 (PHHHQHQHHHQHQHQHQHQHQHPHQHPHQHHHHHPHH) show a composition bias toward basic residues.

It belongs to the XPG/RAD2 endonuclease family. In terms of assembly, forms a complex composed of at least MKT1L, PBP1, XAC1 and LSM12.

Its subcellular location is the cytoplasm. Its function is as follows. Involved in post-transcriptional regulation of gene expression. The protein is Post-transcriptional regulator MKT1L of Trypanosoma brucei brucei (strain 927/4 GUTat10.1).